An 87-amino-acid chain; its full sequence is DNA-directed RNA polymerase subunit omega (87 aa).

The protein belongs to the RNA polymerase subunit omega family. As to quaternary structure, the RNAP catalytic core consists of 2 alpha, 1 beta, 1 beta' and 1 omega subunit. When a sigma factor is associated with the core the holoenzyme is formed, which can initiate transcription.

The enzyme catalyses RNA(n) + a ribonucleoside 5'-triphosphate = RNA(n+1) + diphosphate. Its function is as follows. Promotes RNA polymerase assembly. Latches the N- and C-terminal regions of the beta' subunit thereby facilitating its interaction with the beta and alpha subunits. The sequence is that of DNA-directed RNA polymerase subunit omega from Pseudomonas fluorescens (strain SBW25).